The primary structure comprises 229 residues: UPF0758 protein Mbur_0382 (229 aa).

The MPN domain occupies Lys106 to Ile228. Zn(2+) is bound by residues His177, His179, and Asp190. The short motif at His177 to Asp190 is the JAMM motif element.

Belongs to the UPF0758 family.

The chain is UPF0758 protein Mbur_0382 from Methanococcoides burtonii (strain DSM 6242 / NBRC 107633 / OCM 468 / ACE-M).